A 122-amino-acid polypeptide reads, in one-letter code: Large ribosomal subunit protein uL14c (122 aa).

This sequence belongs to the universal ribosomal protein uL14 family. Part of the 50S ribosomal subunit.

The protein resides in the plastid. It is found in the chloroplast. In terms of biological role, binds to 23S rRNA. The protein is Large ribosomal subunit protein uL14c of Welwitschia mirabilis (Tree tumbo).